The chain runs to 180 residues: Insertion element IS1296 uncharacterized 21.4 kDa protein (180 aa).

This sequence belongs to the IS150/IS1296 orfA family.

This chain is Insertion element IS1296 uncharacterized 21.4 kDa protein, found in Mycoplasma mycoides subsp. mycoides SC.